Consider the following 260-residue polypeptide: Triosephosphate isomerase (260 aa).

Residue 11 to 13 (NWK) coordinates substrate. H103 serves as the catalytic Electrophile. E175 acts as the Proton acceptor in catalysis. Residues G181, S220, and 241-242 (GG) contribute to the substrate site.

Belongs to the triosephosphate isomerase family. In terms of assembly, homodimer.

It localises to the cytoplasm. The enzyme catalyses D-glyceraldehyde 3-phosphate = dihydroxyacetone phosphate. Its pathway is carbohydrate biosynthesis; gluconeogenesis. The protein operates within carbohydrate degradation; glycolysis; D-glyceraldehyde 3-phosphate from glycerone phosphate: step 1/1. In terms of biological role, involved in the gluconeogenesis. Catalyzes stereospecifically the conversion of dihydroxyacetone phosphate (DHAP) to D-glyceraldehyde-3-phosphate (G3P). The polypeptide is Triosephosphate isomerase (Shewanella loihica (strain ATCC BAA-1088 / PV-4)).